A 456-amino-acid chain; its full sequence is tRNA modification GTPase MnmE (456 aa).

(6S)-5-formyl-5,6,7,8-tetrahydrofolate is bound by residues Arg-24, Glu-81, and Lys-120. Residues 216–379 enclose the TrmE-type G domain; the sequence is GMTVVIAGRP…LRDHLKACMG (164 aa). Asn-226 contributes to the K(+) binding site. Residues 226 to 231, 245 to 251, 270 to 273, and 335 to 338 each bind GTP; these read NAGKSS, TDIAGTT, DTAG, and NKAD. Ser-230 contributes to the Mg(2+) binding site. K(+) contacts are provided by Thr-245, Ile-247, and Thr-250. Residue Thr-251 participates in Mg(2+) binding. (6S)-5-formyl-5,6,7,8-tetrahydrofolate is bound at residue Lys-456.

Belongs to the TRAFAC class TrmE-Era-EngA-EngB-Septin-like GTPase superfamily. TrmE GTPase family. In terms of assembly, homodimer. Heterotetramer of two MnmE and two MnmG subunits. It depends on K(+) as a cofactor.

It is found in the cytoplasm. Exhibits a very high intrinsic GTPase hydrolysis rate. Involved in the addition of a carboxymethylaminomethyl (cmnm) group at the wobble position (U34) of certain tRNAs, forming tRNA-cmnm(5)s(2)U34. The protein is tRNA modification GTPase MnmE of Pseudomonas putida (strain GB-1).